A 674-amino-acid chain; its full sequence is Electrogenic aspartate/glutamate antiporter SLC25A13, mitochondrial (674 aa).

Position 2 is an N-acetylalanine (alanine 2). The interval 2-295 is regulatory N-terminal domain; that stretch reads AAAKVALTKR…TLADIERIAP (294 aa). The Mitochondrial intermembrane segment spans residues 2–331; that stretch reads AAAKVALTKR…LLQVAESAYR (330 aa). 4 EF-hand domains span residues 51–86, 87–122, 123–157, and 158–193; these read SQPN…SVLC, APDA…TTIH, QHIP…FLLE, and IQLE…IRPH. Ca(2+) contacts are provided by aspartate 66, threonine 68, aspartate 70, leucine 72, and glutamate 77. A linker loop domain region spans residues 296-311; that stretch reads LEEGTLPFNLAEAQRQ. The interval 321–611 is carrier domain; it reads VLLQVAESAY…LQRWFYIDFG (291 aa). Solcar repeat units lie at residues 326-418, 426-510, and 518-605; these read AESA…VRDK, VPLA…ARAS, and VSPG…LQRW. The chain crosses the membrane as a helical span at residues 332–349; it reads FGLGSVAGAVGATAVYPI. Residues 350–392 are Mitochondrial matrix-facing; that stretch reads DLVKTRMQNQRSTGSFVGELMYKNSFDCFKKVLRYEGFFGLYR. Lysine 353 and lysine 372 each carry N6-acetyllysine. Residues 393–412 traverse the membrane as a helical segment; it reads GLLPQLLGVAPEKAIKLTVN. The Mitochondrial intermembrane portion of the chain corresponds to 413-435; the sequence is DFVRDKFMHKDGSVPLAAEILAG. Residues 436 to 449 form a helical membrane-spanning segment; that stretch reads GCAGGSQVIFTNPL. The Mitochondrial matrix portion of the chain corresponds to 450–484; the sequence is EIVKIRLQVAGEITTGPRVSALSVVRDLGFFGIYK. At lysine 453 the chain carries N6-methyllysine. The residue at position 484 (lysine 484) is an N6-acetyllysine; alternate. Lysine 484 is modified (N6-succinyllysine; alternate). The helical transmembrane segment at 485 to 504 threads the bilayer; that stretch reads GAKACFLRDIPFSAIYFPCY. Topologically, residues 505-523 are mitochondrial intermembrane; that stretch reads AHARASFANEDGQVSPGSL. A helical membrane pass occupies residues 524 to 541; that stretch reads LLAGAIAGMPAASLVTPA. Residues 542–580 are Mitochondrial matrix-facing; that stretch reads DVIKTRLQVAARAGQTTYSGVIDCFKKILREEGPKALWK. At lysine 580 the chain carries N6-succinyllysine. The helical transmembrane segment at 581–599 threads the bilayer; it reads GAARVFRSSPQFGVTLLTY. Residues 600 to 674 are Mitochondrial intermembrane-facing; that stretch reads ELLQRWFYID…PTSEAIGGGP (75 aa). The segment at 612-674 is C-terminal domain; the sequence is GVKPMGSEPV…PTSEAIGGGP (63 aa). Lysine 661 bears the N6-acetyllysine mark.

Belongs to the mitochondrial carrier (TC 2.A.29) family. Homodimer (via N-terminus).

It is found in the mitochondrion inner membrane. It carries out the reaction L-aspartate(in) + L-glutamate(out) + H(+)(out) = L-aspartate(out) + L-glutamate(in) + H(+)(in). It catalyses the reaction 3-sulfino-L-alanine(out) + L-glutamate(in) + H(+)(in) = 3-sulfino-L-alanine(in) + L-glutamate(out) + H(+)(out). The enzyme catalyses 3-sulfino-L-alanine(out) + L-aspartate(in) = 3-sulfino-L-alanine(in) + L-aspartate(out). Mitochondrial electrogenic aspartate/glutamate antiporter that favors efflux of aspartate and entry of glutamate and proton within the mitochondria as part of the malate-aspartate shuttle. Also mediates the uptake of L-cysteinesulfinate (3-sulfino-L-alanine) by mitochondria in exchange of L-glutamate and proton. Can also exchange L-cysteinesulfinate with aspartate in their anionic form without any proton translocation. Lacks transport activity towards gamma-aminobutyric acid (GABA). This Macaca fascicularis (Crab-eating macaque) protein is Electrogenic aspartate/glutamate antiporter SLC25A13, mitochondrial.